The chain runs to 718 residues: Manganese-exporting P-type ATPase (718 aa).

In terms of domain architecture, HMA spans 11–78 (GRMRVKVDWV…AIKGAAHVAA (68 aa)). 6 consecutive transmembrane segments (helical) span residues 87-105 (HSAE…GGVA), 128-146 (TVAT…RGAL), 154-168 (AGTD…VASL), 177-191 (LTVL…YLQD), 327-351 (VGEN…LITG), and 357-375 (MTML…TPTA). The active-site 4-aspartylphosphate intermediate is the Asp408. Mg(2+) contacts are provided by Asp408, Thr410, and Asp610. Helical transmembrane passes span 661–680 (AVDV…AAGL) and 690–709 (PVLA…ANSS).

The protein belongs to the cation transport ATPase (P-type) (TC 3.A.3) family. Type IB subfamily.

It is found in the cell membrane. It catalyses the reaction Mn(2+)(in) + ATP + H2O = Mn(2+)(out) + ADP + phosphate + H(+). Functionally, high affinity, slow turnover Mn(2+) transporting ATPase. The protein is Manganese-exporting P-type ATPase (ctpC) of Mycobacterium bovis (strain ATCC BAA-935 / AF2122/97).